A 383-amino-acid polypeptide reads, in one-letter code: Delta(12) fatty acid desaturase FAD2 (383 aa).

Positions 1–29 (MGAGGRMQDPTNGGNKTEPEPIQRVPHEK) are disordered. Residues 17-29 (TEPEPIQRVPHEK) are compositionally biased toward basic and acidic residues. Helical transmembrane passes span 50–70 (VIRS…LYYI) and 85–105 (VAWP…WVIA). The short motif at 106–110 (HECGH) is the Histidine box-1 element. Residues 118 to 138 (WLDDTVGLVLHSFLLVPYFSW) traverse the membrane as a helical segment. The short motif at 142–146 (HRRHH) is the Histidine box-2 element. 3 consecutive transmembrane segments (helical) span residues 180-200 (ILTL…FNVS), 226-246 (IFIS…LAMT), and 252-272 (VLTM…LITF). A Histidine box-3 motif is present at residues 316–320 (HVAHH).

Belongs to the fatty acid desaturase type 1 family. In terms of tissue distribution, expressed in leaves, flower buds and developing seeds.

The protein localises to the membrane. It functions in the pathway lipid metabolism; polyunsaturated fatty acid biosynthesis. Functionally, catalyzes the desaturation of oleic acid to linoleic acid. Introduces a double bond at position 12 of 16:1(9Z) and 18:1(9Z). The protein is Delta(12) fatty acid desaturase FAD2 of Calendula officinalis (Pot marigold).